The chain runs to 953 residues: MNEEYIKVRGAKEHNLKNINVDIPRNKFVVITGLSGSGKSSLAFDTIYAEGQRRYVESLSSYARQFLHLQNKPNVESISGLSPAIAIDQKTTSKNPRSTVGTITEIYDYLRLLYARVGIPYSPVTGLPIHSQTVAEMVDIINELPKGTKVYLLAPIVRGHKGEFRREIINLKKQGFQKLIVNGEVCEIDDLPKLDKNKKHNIEVIVDRIVLDENLGNRLADSLESSLNLADGITYLEIVELPQAVKSQFKKNQRITFSEKYSCPVSGFHLTEIEPRIFSFNSPFGACPKCEGIGKEFFFDRDLIVQDQRISIKDGAIVPWGSTSSKFILETLKALADHYKFSIEVPFISLSQNVKDILFEGSGEEEIKFEFHDGSKTQIIKQPFAGIIPSLQEKDRTIESVLIKEELAKFKSEHKCTACSGFRLKDEALCVKIANLHIGEVAGMSIAALQKWFSHLEEKLNQKQLFIAKRILKEINERLKFLMNVGLDYLTLSREAGTLSGGESQRIRLASQIGSGLSGVLYVLDEPSIGLHQRDNTRLIATLKRLRDLGNTVLVVEHDEETMYEADHIIDIGPGAGIHGGRVIAEGNAEKIKHFEESITGRYLSGRQTIKVPSETRVGHDNRAIELLGAVSNNLDNVDIKIPLGTFTAITGVSGSGKSSLMIHTLYKAALKHLEPTSKVFPGKYRELKGLEYIDKIIDINQSPIGRTPRSNPATYTGAFTHIRDWFVELPESKARGYKVGRFSFNVKGGRCEACQGDGLIKIEMHFLPDVYVKCDICNGHRYNRETLEIKYKGKSIADILMMTVEDAMQFFDKIPLIYEKLITLNEVGLGYIKIGQSATTLSGGEAQRVKLAKELSRRSTGKTLYILDEPTTGLHIDDIKKLLKVLHKLVDMGNTVLVIEHNLDVIKTADYIIDVGPEGGDKGGKIVVCGTPADIAACKESHTGRYLKQYLV.

33-40 provides a ligand contact to ATP; the sequence is GLSGSGKS. 2 consecutive ABC transporter domains span residues 320 to 599 and 619 to 949; these read WGST…EESI and GHDN…RYLK. An ATP-binding site is contributed by 652–659; the sequence is GVSGSGKS. The segment at 752–778 adopts a C4-type zinc-finger fold; the sequence is CEACQGDGLIKIEMHFLPDVYVKCDIC.

Belongs to the ABC transporter superfamily. UvrA family. As to quaternary structure, forms a heterotetramer with UvrB during the search for lesions.

It is found in the cytoplasm. The UvrABC repair system catalyzes the recognition and processing of DNA lesions. UvrA is an ATPase and a DNA-binding protein. A damage recognition complex composed of 2 UvrA and 2 UvrB subunits scans DNA for abnormalities. When the presence of a lesion has been verified by UvrB, the UvrA molecules dissociate. This Rickettsia typhi (strain ATCC VR-144 / Wilmington) protein is UvrABC system protein A.